Reading from the N-terminus, the 358-residue chain is tRNA-specific 2-thiouridylase MnmA (358 aa).

ATP contacts are provided by residues 7–14 (AMSGGVDS) and Leu33. The active-site Nucleophile is Cys101. Cys101 and Cys197 are disulfide-bonded. Residue Gly125 coordinates ATP. Positions 147–149 (KDQ) are interaction with tRNA. Cys197 functions as the Cysteine persulfide intermediate in the catalytic mechanism.

It belongs to the MnmA/TRMU family.

It is found in the cytoplasm. It carries out the reaction S-sulfanyl-L-cysteinyl-[protein] + uridine(34) in tRNA + AH2 + ATP = 2-thiouridine(34) in tRNA + L-cysteinyl-[protein] + A + AMP + diphosphate + H(+). In terms of biological role, catalyzes the 2-thiolation of uridine at the wobble position (U34) of tRNA, leading to the formation of s(2)U34. The polypeptide is tRNA-specific 2-thiouridylase MnmA (Rickettsia prowazekii (strain Madrid E)).